The sequence spans 322 residues: NADH-quinone oxidoreductase subunit H (322 aa).

8 consecutive transmembrane segments (helical) span residues Ile12–Ile32, Ile79–Pro99, Val111–Gly131, Leu151–Phe171, Leu183–Val203, Phe234–Phe254, Leu262–Leu282, and Val301–Ala321.

Belongs to the complex I subunit 1 family. As to quaternary structure, NDH-1 is composed of 14 different subunits. Subunits NuoA, H, J, K, L, M, N constitute the membrane sector of the complex.

It localises to the cell inner membrane. It carries out the reaction a quinone + NADH + 5 H(+)(in) = a quinol + NAD(+) + 4 H(+)(out). In terms of biological role, NDH-1 shuttles electrons from NADH, via FMN and iron-sulfur (Fe-S) centers, to quinones in the respiratory chain. The immediate electron acceptor for the enzyme in this species is believed to be ubiquinone. Couples the redox reaction to proton translocation (for every two electrons transferred, four hydrogen ions are translocated across the cytoplasmic membrane), and thus conserves the redox energy in a proton gradient. This subunit may bind ubiquinone. The chain is NADH-quinone oxidoreductase subunit H from Aeromonas hydrophila subsp. hydrophila (strain ATCC 7966 / DSM 30187 / BCRC 13018 / CCUG 14551 / JCM 1027 / KCTC 2358 / NCIMB 9240 / NCTC 8049).